A 308-amino-acid chain; its full sequence is E3 ubiquitin-protein ligase RING2 (308 aa).

S2 is modified (N-acetylserine). Residues 2 to 179 form an interaction with HIP2 region; sequence SQAVQTNGTQ…AEDNGDSSHC (178 aa). S41 carries the phosphoserine modification. The RING-type zinc-finger motif lies at 51–91; sequence CPICLDMLKNTMTTKECLHRFCADCIITALRSGNKECPTCR. Positions 93–98 are interaction with nucleosomes via an acidic patch on histone H2A and histone H2B; it reads KLVSKR. A Glycyl lysine isopeptide (Lys-Gly) (interchain with G-Cter in ubiquitin) cross-link involves residue K112. S143 and S168 each carry phosphoserine. The disordered stretch occupies residues 157–206; sequence QRGKKQQIENGSGAEDNGDSSHCSNASTHSNQEAGPSNKRTKTSDDSGLE. Positions 176–191 are enriched in polar residues; that stretch reads SSHCSNASTHSNQEAG. K249 participates in a covalent cross-link: Glycyl lysine isopeptide (Lys-Gly) (interchain with G-Cter in SUMO2).

In terms of assembly, component of chromatin-associated Polycomb (PcG) complexes. Component of a number of PRC1-like complexes; these complexes contain either the polycomb group ring finger protein PCGF1, or PCGF2, or PCGF3, or BMI1, or PCGF5, or PCGF6. Distinct PRC1-like complexes are composed of a RING1 subunit (RING1B or RING1A), one of the six PCGF proteins (PCGF1, PCGF2, PCGF3, BMI1, PCGF5 or PCGF6), one PHC protein (PHC1, PHC2 or PHC3) and one of the CBX proteins (CBX2, CBX4, CBX6, CBX7 or CBX8). Part of a complex that contains RNF2, UB2D3 and BMI1; within that complex RNF2 and BMI1 form a tight heterodimer, where UB2D3 interacts only with RNF2. The complex composed of RNF2, UB2D3 and BMI1 binds nucleosomes, and has activity only with nucleosomal histone H2A. Part of a complex that contains PCGF5, RNF2 and UBE2D3. Part of a complex that contains AUTS2, PCGF5, RNF2, CSNK2B and RYBP. Interacts with CBX6 and CBX8. Interacts with PHC1, PCGF2, RYBP, CBX7, CBX4, CBX2, RNF1/RING1, BMI1 and PHC2. Interaction with RYBP and CBX7 is mutually exclusive; both compete for the same binding site on RNF2. Component of repressive BCOR complex containing a Polycomb group subcomplex at least composed of RYBP, PCGF1, BCOR and RING1. Interacts with CBX2 and PHC1. Interacts with CHTOP. Interacts with AURKB. Part of the E2F6.com-1 complex in G0 phase composed of E2F6, MGA, MAX, TFDP1, CBX3, BAT8, EUHMTASE1, RNF1/RING1, RNF2/RING2, MBLR, L3MBTL2 and YAF2. Component of some MLL1/MLL complex, at least composed of the core components KMT2A/MLL1, ASH2L, HCFC1/HCF1, WDR5 and RBBP5, as well as the facultative components BACC1, CHD8, E2F6, HSP70, INO80C, KANSL1, LAS1L, MAX, MCRS1, MGA, MYST1/MOF, PELP1, PHF20, PRP31, RING2, RUVB1/TIP49A, RUVB2/TIP49B, SENP3, TAF1, TAF4, TAF6, TAF7, TAF9 and TEX10. Interacts with RYBP, HIP2 and TFCP2. Interacts with NUPR1. Interacts with SAMD7 in a PHC2-dependent manner. Post-translationally, monoubiquitinated, by auto-ubiquitination. Polyubiquitinated in the presence of UBE2D3 (in vitro).

The protein localises to the nucleus. It is found in the cytoplasm. The protein resides in the chromosome. The catalysed reaction is S-ubiquitinyl-[E2 ubiquitin-conjugating enzyme]-L-cysteine + [acceptor protein]-L-lysine = [E2 ubiquitin-conjugating enzyme]-L-cysteine + N(6)-ubiquitinyl-[acceptor protein]-L-lysine.. The protein operates within protein modification; protein ubiquitination. Functionally, E3 ubiquitin-protein ligase that mediates monoubiquitination of 'Lys-119' of histone H2A (H2AK119Ub), thereby playing a central role in histone code and gene regulation. H2AK119Ub gives a specific tag for epigenetic transcriptional repression and participates in X chromosome inactivation of female mammals. May be involved in the initiation of both imprinted and random X inactivation. Essential component of a Polycomb group (PcG) multiprotein PRC1-like complex, a complex class required to maintain the transcriptionally repressive state of many genes, including Hox genes, throughout development. PcG PRC1 complex acts via chromatin remodeling and modification of histones, rendering chromatin heritably changed in its expressibility. E3 ubiquitin-protein ligase activity is enhanced by BMI1/PCGF4. Acts as the main E3 ubiquitin ligase on histone H2A of the PRC1 complex, while RING1 may rather act as a modulator of RNF2/RING2 activity. Plays a role in the transcriptional repression of genes that are required for pluripotency in embryonic stem cells, thereby contributing to differentiation of the ectodermal and endodermal germ layers. Association with the chromosomal DNA is cell-cycle dependent. In resting B- and T-lymphocytes, interaction with AURKB leads to block its activity, thereby maintaining transcription in resting lymphocytes. Also acts as a negative regulator of autophagy by mediating ubiquitination of AMBRA1, leading to its subsequent degradation. The sequence is that of E3 ubiquitin-protein ligase RING2 (Rnf2) from Rattus norvegicus (Rat).